A 567-amino-acid polypeptide reads, in one-letter code: Geranylgeranyl transferase type-2 subunit alpha (567 aa).

6 PFTA repeats span residues 44-78 (LDES…QLEV), 88-122 (LVKA…RLPE), 124-158 (NWAR…QAAV), 159-193 (PPAE…QLHP), 207-241 (VLLK…RADP), and 363-397 (VLQS…ALDP). Residue Ser-98 is modified to Phosphoserine. 5 LRR repeats span residues 442–463 (EVRV…EQLL), 464–486 (LVTH…AALR), 487–508 (CLEV…TNLP), 509–530 (RLQE…QPLT), and 534–555 (RLTL…SEHL).

The protein belongs to the protein prenyltransferase subunit alpha family. In terms of assembly, heterotrimer composed of RABGGTA, RABGGTB and CHM; within this trimer, RABGGTA and RABGGTB form the catalytic component B, while CHM (component A) mediates peptide substrate binding. The Rab GGTase dimer (RGGT) interacts with CHM (component A) prior to Rab protein binding; the association is stabilized by geranylgeranyl pyrophosphate (GGpp). The CHM:RGGT:Rab complex is destabilized by GGpp. Interacts with non-phosphorylated form of RAB8A; phosphorylation of RAB8A at 'Thr-72' disrupts this interaction.

The enzyme catalyses geranylgeranyl diphosphate + L-cysteinyl-[protein] = S-geranylgeranyl-L-cysteinyl-[protein] + diphosphate. The enzymatic reaction requires the aid of a Rab escort protein (also called component A), such as CHM. Functionally, catalyzes the transfer of a geranylgeranyl moiety from geranylgeranyl diphosphate to both cysteines of Rab proteins with the C-terminal sequence -XXCC, -XCXC and -CCXX, such as RAB1A, RAB3A, RAB5A and RAB7A. The sequence is that of Geranylgeranyl transferase type-2 subunit alpha (RABGGTA) from Bos taurus (Bovine).